The sequence spans 449 residues: C4-dicarboxylate transport protein (449 aa).

Positions 1 to 20 are disordered; it reads MSALTESFGPVPSAKSKPPA. Residues 10-20 show a composition bias toward low complexity; that stretch reads PVPSAKSKPPA. 8 consecutive transmembrane segments (helical) span residues 28–48, 66–86, 101–121, 167–187, 205–225, 241–261, 326–346, and 370–390; these read LLYL…WLSP, LIKM…IAHI, LYFE…GNVV, GDIL…MTLG, FGVI…AMAF, LIAV…GLIA, IYMT…LTWT, and FITL…GMAI.

It belongs to the dicarboxylate/amino acid:cation symporter (DAACS) (TC 2.A.23) family.

The protein localises to the cell inner membrane. In terms of biological role, responsible for the transport of dicarboxylates such as succinate, fumarate, and malate from the periplasm across the membrane. The sequence is that of C4-dicarboxylate transport protein from Rhodopseudomonas palustris (strain BisB18).